The sequence spans 400 residues: Aspartate aminotransferase (400 aa).

L-aspartate contacts are provided by Gly-37, Trp-126, and Asn-176. Lys-238 carries the N6-(pyridoxal phosphate)lysine modification. Arg-367 is an L-aspartate binding site.

Belongs to the class-I pyridoxal-phosphate-dependent aminotransferase family. In terms of assembly, homodimer. Requires pyridoxal 5'-phosphate as cofactor.

Its subcellular location is the cytoplasm. It catalyses the reaction L-aspartate + 2-oxoglutarate = oxaloacetate + L-glutamate. Functionally, catalyzes the reversible conversion of aspartate and 2-oxoglutarate to glutamate and oxaloacetate. Has very weak prephenate aminotransferase activity. This chain is Aspartate aminotransferase, found in Musicola paradisiaca (strain Ech703) (Dickeya paradisiaca).